Reading from the N-terminus, the 625-residue chain is Alpha-amylase 1 (625 aa).

An N-terminal signal peptide occupies residues 1–22 (MGFSKIALFSLFALFGLPTSLA). Cys51 and Cys59 form a disulfide bridge. Trp105 contacts substrate. Asn143 contributes to the Ca(2+) binding site. 3 N-linked (GlcNAc...) asparagine glycosylation sites follow: Asn153, Asn163, and Asn180. Cys172 and Cys187 are disulfide-bonded. Ca(2+)-binding residues include Glu185 and Asp198. Arg227 lines the substrate pocket. Asp229 contacts Ca(2+). Asp229 functions as the Nucleophile in the catalytic mechanism. Substrate is bound at residue 232–233 (KQ). The N-linked (GlcNAc...) asparagine glycan is linked to Asn241. Glu253 lines the Ca(2+) pocket. The Proton donor role is filled by Glu253. Residues Asn260 and Asn286 are each glycosylated (N-linked (GlcNAc...) asparagine). The cysteines at positions 263 and 306 are disulfide-linked. Substrate is bound at residue Asp322. A glycan (N-linked (GlcNAc...) asparagine) is linked at Asn331. A substrate-binding site is contributed by Arg370. 2 N-linked (GlcNAc...) asparagine glycosylation sites follow: Asn440 and Asn461. The interval 526–579 (SATSSSKSSSSSSSRSGSSSSSSSRSGSTSSSGSSHTITSTSQSVHTSGSSTST) is disordered. Ser603 carries the GPI-anchor amidated serine lipid modification. Positions 604–625 (SANAVRVSILGVAAFIAIVLFI) are cleaved as a propeptide — removed in mature form.

This sequence belongs to the glycosyl hydrolase 13 family. The cofactor is Ca(2+).

The protein localises to the cell membrane. The catalysed reaction is Endohydrolysis of (1-&gt;4)-alpha-D-glucosidic linkages in polysaccharides containing three or more (1-&gt;4)-alpha-linked D-glucose units.. The sequence is that of Alpha-amylase 1 (aah1) from Schizosaccharomyces pombe (strain 972 / ATCC 24843) (Fission yeast).